Reading from the N-terminus, the 706-residue chain is MRVRPKRSVITLMAIVVVMLILRNQFYSSRTRGHGQEPVISSSQKNLYDGWITPNFYRKGDPLELIVNKVESDLTQLPYAYYDLPFTCPPTMHKKPLHLSLNEIIRGDRKWESDYKLKFGEDNPCETLCARKTTKEGMQTLDKLVREGYVVQWLIDDELPAATTFISTTDHKKYYASGFPLGFIDPDTDKTYLHNHVMLVIRFHASDNDKNTIVGFEVYPRSVSDYHCPGASKNYEQYEIVIPEDENELTYLPFTYSVYWREEFEVDWNHRWDYFLNAGELSDEQSIQFHWMSLANSVGIVLSISFITLIIYVRVMYTDKSNSKSPKYMINIEGIETEDDLDDDKYGKYSVYTVAKDWIQNGRPNLFGLKVLILLVSFGVQFLFTIIGSLTISCSMNKLHNVRNSVLTMAILFFVLGAFMASFVGTRLSMVTKTKRTKANYLDDNRYLKDYKKFSPIFTILCGSSLPGIVMVSTFLLNSIVWAHDSTSALPFKTIVFFMSIYFIVCIPLSLFGGIVANNIPLPQYWLSGITKDESNSDGNGLFVPKSRAKFNPLVYCGIYLCGIFPLLVIYVEMQYVYKSLWLEKTTFYYFYGFLFLSIILLCVLTMEISIIGSYLLMRFCFEDKVVRNNWRWKCFEMGFSGGVYMELYSLYYIFAVLNIHGFSSILISICYSLIFNVMCSLGLGALSYLTASWFINKIYHQKVNL.

Positions 1-33 are cleaved as a signal peptide; it reads MRVRPKRSVITLMAIVVVMLILRNQFYSSRTRG. At 34–290 the chain is on the lumenal side; the sequence is HGQEPVISSS…LSDEQSIQFH (257 aa). A helical membrane pass occupies residues 291-311; that stretch reads WMSLANSVGIVLSISFITLII. The Cytoplasmic portion of the chain corresponds to 312–371; that stretch reads YVRVMYTDKSNSKSPKYMINIEGIETEDDLDDDKYGKYSVYTVAKDWIQNGRPNLFGLKV. Residues 372-392 form a helical membrane-spanning segment; sequence LILLVSFGVQFLFTIIGSLTI. The Lumenal portion of the chain corresponds to 393–405; sequence SCSMNKLHNVRNS. Residues 406-426 traverse the membrane as a helical segment; it reads VLTMAILFFVLGAFMASFVGT. Residues 427–456 lie on the Cytoplasmic side of the membrane; it reads RLSMVTKTKRTKANYLDDNRYLKDYKKFSP. The chain crosses the membrane as a helical span at residues 457-477; that stretch reads IFTILCGSSLPGIVMVSTFLL. At 478–494 the chain is on the lumenal side; sequence NSIVWAHDSTSALPFKT. The chain crosses the membrane as a helical span at residues 495 to 515; the sequence is IVFFMSIYFIVCIPLSLFGGI. Topologically, residues 516 to 553 are cytoplasmic; that stretch reads VANNIPLPQYWLSGITKDESNSDGNGLFVPKSRAKFNP. The chain crosses the membrane as a helical span at residues 554 to 574; it reads LVYCGIYLCGIFPLLVIYVEM. Residues 575-592 are Lumenal-facing; the sequence is QYVYKSLWLEKTTFYYFY. The helical transmembrane segment at 593 to 613 threads the bilayer; sequence GFLFLSIILLCVLTMEISIIG. Over 614-637 the chain is Cytoplasmic; it reads SYLLMRFCFEDKVVRNNWRWKCFE. A helical membrane pass occupies residues 638 to 658; that stretch reads MGFSGGVYMELYSLYYIFAVL. Topologically, residues 659–665 are lumenal; it reads NIHGFSS. A helical membrane pass occupies residues 666–686; sequence ILISICYSLIFNVMCSLGLGA. Residues 687-706 are Cytoplasmic-facing; the sequence is LSYLTASWFINKIYHQKVNL.

It belongs to the nonaspanin (TM9SF) (TC 9.A.2) family.

It localises to the golgi apparatus membrane. With EMP70 and TMN2, plays a critical role in the late stages of a nutrient-controlled pathway notably regulating FLO11 gene expression. Acts downstream of RAS2 and TOR. Essential for cell adhesion and filamentous growth. May play a role as effector of cellular copper homeostasis. The polypeptide is Transmembrane 9 superfamily member 3 (TMN3) (Saccharomyces cerevisiae (strain ATCC 204508 / S288c) (Baker's yeast)).